A 635-amino-acid polypeptide reads, in one-letter code: Bifunctional lysine-specific demethylase and histidyl-hydroxylase NO66 (635 aa).

Disordered regions lie at residues 1–115 (MSAV…LQNS) and 141–190 (FNGE…KANG). The span at 84–99 (ASASDINTSASKNVNA) shows a compositional bias: low complexity. The span at 141–156 (FNGESLKNNSNHSTPV) shows a compositional bias: polar residues. The region spanning 295 to 440 (CSIRMLNPQT…DLLELFFPHA (146 aa)) is the JmjC domain. Residues His-341, Asp-343, and His-406 each coordinate Fe cation.

The protein belongs to the ROX family. NO66 subfamily. Fe(2+) is required as a cofactor.

It localises to the nucleus. The enzyme catalyses N(6),N(6)-dimethyl-L-lysyl(36)-[histone H3] + 2 2-oxoglutarate + 2 O2 = L-lysyl(36)-[histone H3] + 2 formaldehyde + 2 succinate + 2 CO2. Functionally, oxygenase that can act as both a histone lysine demethylase and a ribosomal histidine hydroxylase. Specifically demethylates 'Lys-4' (H3K4me) and 'Lys-36' (H3K36me) of histone H3, thereby playing a central role in histone code. The polypeptide is Bifunctional lysine-specific demethylase and histidyl-hydroxylase NO66 (Aedes aegypti (Yellowfever mosquito)).